The primary structure comprises 339 residues: MDRLLQFRFESAPGWQSNVALFLLSIGGLFTACKLFSFCRALLSIFVLPGQKLSKFGPKGSWALVTGASDGIGKEYSLQLARAGYNILLVSRTTSKLAAVADEIKSKSPTVQTKVFAMDFFKNNDGDYENLKLLIQDLDISILVNNVGRSHSIPTPFVLTPLEELENIIMINCTGTLRITQLVAPGMMQRKRGLILTMASFAGMIPTPLLATYCGSKAFLQYWSIALGAELQPYGVQVELVQSHLVTSAMSKIRRPTVTVPIPRDLVRAVLSKIGRGSGLSAYAYTSVPYWSHGLMAYALTQVLGHMGKFVLGYNKALHESIRKRALRKAEREKNKKST.

Residues 19–39 (VALFLLSIGGLFTACKLFSFC) form a helical membrane-spanning segment. 9 residues coordinate NADP(+): leucine 64, lysine 105, aspartate 119, aspartate 127, asparagine 146, tyrosine 213, lysine 217, valine 246, and serine 248. Tyrosine 213 (proton donor) is an active-site residue. The Lowers pKa of active site Tyr role is filled by lysine 217.

Belongs to the short-chain dehydrogenases/reductases (SDR) family.

The protein localises to the endoplasmic reticulum membrane. The catalysed reaction is a very-long-chain (3R)-3-hydroxyacyl-CoA + NADP(+) = a very-long-chain 3-oxoacyl-CoA + NADPH + H(+). Its pathway is lipid metabolism; fatty acid biosynthesis. In terms of biological role, component of the microsomal membrane bound fatty acid elongation system, which produces the 26-carbon very long-chain fatty acids (VLCFA) from palmitate. Catalyzes the reduction of the 3-ketoacyl-CoA intermediate that is formed in each cycle of fatty acid elongation. VLCFAs serve as precursors for ceramide and sphingolipids. This is Very-long-chain 3-oxoacyl-CoA reductase from Ajellomyces capsulatus (strain NAm1 / WU24) (Darling's disease fungus).